The sequence spans 188 residues: Adenine phosphoribosyltransferase (188 aa).

134–138 (ATGGS) is a binding site for AMP.

The protein belongs to the purine/pyrimidine phosphoribosyltransferase family. In terms of assembly, homodimer. The cofactor is Mg(2+).

It localises to the cytoplasm. The protein resides in the nucleus. The enzyme catalyses AMP + diphosphate = 5-phospho-alpha-D-ribose 1-diphosphate + adenine. The protein operates within purine metabolism; AMP biosynthesis via salvage pathway; AMP from adenine: step 1/1. Catalyzes a salvage reaction resulting in the formation of AMP, that is energically less costly than de novo synthesis. The chain is Adenine phosphoribosyltransferase (APT1) from Candida albicans (strain SC5314 / ATCC MYA-2876) (Yeast).